Here is an 896-residue protein sequence, read N- to C-terminus: Alanine--tRNA ligase (896 aa).

Residues histidine 581, histidine 585, cysteine 684, and histidine 688 each contribute to the Zn(2+) site.

It belongs to the class-II aminoacyl-tRNA synthetase family. It depends on Zn(2+) as a cofactor.

It is found in the cytoplasm. It catalyses the reaction tRNA(Ala) + L-alanine + ATP = L-alanyl-tRNA(Ala) + AMP + diphosphate. Functionally, catalyzes the attachment of alanine to tRNA(Ala) in a two-step reaction: alanine is first activated by ATP to form Ala-AMP and then transferred to the acceptor end of tRNA(Ala). Also edits incorrectly charged Ser-tRNA(Ala) and Gly-tRNA(Ala) via its editing domain. The protein is Alanine--tRNA ligase of Renibacterium salmoninarum (strain ATCC 33209 / DSM 20767 / JCM 11484 / NBRC 15589 / NCIMB 2235).